The sequence spans 306 residues: MELVFLGTGAGVPSRGRNVTSIALSMLNERNTIWLFDCGEATQHQIMRSQIKLSKLEKIFITHMHGDHIFGLPGLLSSRSFQGGDSNLTIYGPAGIAEYVETSLRLSGTRLTYKINFEEIEPGLIFEDEMFLVTADDLDHGVRSFGYRIVEKDKQGALNAEKLKADGVEAGPVFQKLKNGEIVTLADGRVIDGKNYIGEPQKGKIISIFGDTKETANELELALNADILVHEATFEGDKAKMAGEYMHSTTLQAANLAKTANVKKLILTHISSRYDRDASKELLIEAKTIFENTEIAYDLAVFPIGE.

Positions 63, 65, 67, 68, 140, 211, and 269 each coordinate Zn(2+). The active-site Proton acceptor is Asp-67.

It belongs to the RNase Z family. As to quaternary structure, homodimer. The cofactor is Zn(2+).

It catalyses the reaction Endonucleolytic cleavage of RNA, removing extra 3' nucleotides from tRNA precursor, generating 3' termini of tRNAs. A 3'-hydroxy group is left at the tRNA terminus and a 5'-phosphoryl group is left at the trailer molecule.. Functionally, zinc phosphodiesterase, which displays some tRNA 3'-processing endonuclease activity. Probably involved in tRNA maturation, by removing a 3'-trailer from precursor tRNA. The chain is Ribonuclease Z from Listeria monocytogenes serotype 4b (strain CLIP80459).